The following is a 448-amino-acid chain: Tryptamine benzoyltransferase 2 (448 aa).

The segment at 1–20 (MEITSSAMLKPAPTPTPHPL) is disordered. Residues His155 and Asp386 each act as proton acceptor in the active site.

This sequence belongs to the plant acyltransferase family.

Functionally, hydroxycinnamoyl transferase that catalyzes the transfer of an acyl from benzoyl-CoA to tryptamine, to produce benzoyl tryptamine. Serotonin and tyramine serve as acyl acceptors in vitro. Specific for benzoyl-CoA as acyl donor. Has no activity with p-coumaroyl-CoA, caffeoyl-CoA, or feruloyl-CoA as acyl donors. The chain is Tryptamine benzoyltransferase 2 from Oryza sativa subsp. japonica (Rice).